A 284-amino-acid chain; its full sequence is RNA polymerase sigma factor RpoH (284 aa).

The interval 53 to 122 (LILSHLRFVV…IHEYVLRNWR (70 aa)) is sigma-70 factor domain-2. An Interaction with polymerase core subunit RpoC motif is present at residues 77–80 (DLIQ). The sigma-70 factor domain-4 stretch occupies residues 228–280 (AMQGLDERSQDIIRARWLDEDNKSTLQELADRYGVSAERVRQLEKNAMKKLRA). A DNA-binding region (H-T-H motif) is located at residues 253–272 (LQELADRYGVSAERVRQLEK).

Belongs to the sigma-70 factor family. RpoH subfamily. In terms of assembly, interacts with the RNA polymerase core enzyme.

It is found in the cytoplasm. Functionally, sigma factors are initiation factors that promote the attachment of RNA polymerase to specific initiation sites and are then released. This sigma factor is involved in regulation of expression of heat shock genes. The chain is RNA polymerase sigma factor RpoH from Escherichia coli O6:H1 (strain CFT073 / ATCC 700928 / UPEC).